The primary structure comprises 427 residues: Adenylosuccinate synthetase (427 aa).

GTP contacts are provided by residues Gly-12–Lys-18 and Gly-40–Thr-42. The Proton acceptor role is filled by Asp-13. Positions 13 and 40 each coordinate Mg(2+). IMP contacts are provided by residues Asp-13 to Lys-16, Asn-38 to His-41, Thr-128, Arg-142, Gln-223, Thr-238, and Arg-302. The active-site Proton donor is the His-41. Val-298–Arg-304 provides a ligand contact to substrate. GTP is bound by residues Arg-304, Lys-330–Asp-332, and Gly-412–Gly-414.

Belongs to the adenylosuccinate synthetase family. As to quaternary structure, homodimer. It depends on Mg(2+) as a cofactor.

Its subcellular location is the cytoplasm. The catalysed reaction is IMP + L-aspartate + GTP = N(6)-(1,2-dicarboxyethyl)-AMP + GDP + phosphate + 2 H(+). It participates in purine metabolism; AMP biosynthesis via de novo pathway; AMP from IMP: step 1/2. Its function is as follows. Plays an important role in the de novo pathway of purine nucleotide biosynthesis. Catalyzes the first committed step in the biosynthesis of AMP from IMP. This Parafrankia sp. (strain EAN1pec) protein is Adenylosuccinate synthetase.